The following is a 347-amino-acid chain: Uroporphyrinogen decarboxylase (347 aa).

Substrate is bound by residues 24–28, Phe-42, Asp-73, Tyr-150, Thr-205, and His-320; that span reads RQAGR.

It belongs to the uroporphyrinogen decarboxylase family. In terms of assembly, homodimer.

Its subcellular location is the cytoplasm. It catalyses the reaction uroporphyrinogen III + 4 H(+) = coproporphyrinogen III + 4 CO2. It participates in porphyrin-containing compound metabolism; protoporphyrin-IX biosynthesis; coproporphyrinogen-III from 5-aminolevulinate: step 4/4. In terms of biological role, catalyzes the decarboxylation of four acetate groups of uroporphyrinogen-III to yield coproporphyrinogen-III. The protein is Uroporphyrinogen decarboxylase of Gloeobacter violaceus (strain ATCC 29082 / PCC 7421).